A 234-amino-acid chain; its full sequence is Aspartate/glutamate leucyltransferase (234 aa).

This sequence belongs to the R-transferase family. Bpt subfamily.

The protein resides in the cytoplasm. The catalysed reaction is N-terminal L-glutamyl-[protein] + L-leucyl-tRNA(Leu) = N-terminal L-leucyl-L-glutamyl-[protein] + tRNA(Leu) + H(+). It catalyses the reaction N-terminal L-aspartyl-[protein] + L-leucyl-tRNA(Leu) = N-terminal L-leucyl-L-aspartyl-[protein] + tRNA(Leu) + H(+). Functions in the N-end rule pathway of protein degradation where it conjugates Leu from its aminoacyl-tRNA to the N-termini of proteins containing an N-terminal aspartate or glutamate. The polypeptide is Aspartate/glutamate leucyltransferase (Hahella chejuensis (strain KCTC 2396)).